Here is a 1693-residue protein sequence, read N- to C-terminus: Serine protease filzig (1693 aa).

Over 1-47 (MFKWVTPASTATLSRCTLPATTAATTTTTAMAATRTATTTTRTTRPQ) the chain is Cytoplasmic. The helical; Signal-anchor for type II membrane protein transmembrane segment at 48-68 (LLSIALTSLIIIVASFVPTTS) threads the bilayer. At 69-1693 (GFRSIETNGG…PWLRSITGVK (1625 aa)) the chain is on the extracellular side. 4 disordered regions span residues 170 to 198 (QQSAAQSSFESYGEQQQSLSEEQVAQQPS), 212 to 321 (QQLD…NDDF), 352 to 465 (GLQD…THPG), and 477 to 524 (STGY…TTVS). Composition is skewed to polar residues over residues 178–198 (FESYGEQQQSLSEEQVAQQPS) and 212–222 (QQLDSSSSISP). 2 stretches are compositionally biased toward low complexity: residues 230-241 (EPQQQEYQSESE) and 252-268 (TSSSSTEATQSQSSSAS). A compositionally biased stretch (polar residues) spans 274 to 294 (EPSQPADASNDQTTQKINKQP). Composition is skewed to low complexity over residues 358–404 (SSES…PTQK), 422–431 (QQKPQQVAKP), and 488–501 (EPPKQQQQQQPAEQ). Over residues 502-524 (SYISSSTSAKRPTTGHNSPTTVS) the composition is skewed to polar residues. Residues Asn541 and Asn582 are each glycosylated (N-linked (GlcNAc...) asparagine). Disordered regions lie at residues 615–635 (QDASAAVSQSAEMPTARPGYG), 752–1007 (HYNP…PPAT), and 1057–1090 (YAHRPTSSGSYGHKKPGFVQINGTPKPPRPTVLI). Over residues 771-799 (SVSSHTTKVQEQMDETSNGYQQSETTSGY) the composition is skewed to polar residues. Basic residues predominate over residues 836–847 (PRPKPSTKRPAV). Composition is skewed to polar residues over residues 951 to 962 (QYDQPSAPSASY) and 989 to 1000 (KPISTSYVTGPS). 2 N-linked (GlcNAc...) asparagine glycosylation sites follow: Asn1215 and Asn1272. 3 stretches are compositionally biased toward low complexity: residues 1297-1307 (PVRTATTTRPK), 1331-1353 (TTTRKPATRRTTVAAKVTTTTRR), and 1362-1376 (RVSSTVKTTTVSSAR). Residues 1297–1435 (PVRTATTTRP…TPNLAFHSPS (139 aa)) form a disordered region. The span at 1380–1391 (DEIVDEEDEEDV) shows a compositional bias: acidic residues. The Peptidase S1 domain maps to 1449–1691 (IVGGKGSTFG…YKPWLRSITG (243 aa)). Residues Cys1480 and Cys1496 are joined by a disulfide bond. Active-site charge relay system residues include His1495 and Asp1544. 2 disulfide bridges follow: Cys1608/Cys1627 and Cys1638/Cys1667. Ser1642 (charge relay system) is an active-site residue.

It belongs to the peptidase S1 family.

It is found in the cell membrane. Its function is as follows. Probable endopeptidase. In tracheal terminal cells, acts downstream of ich to regulate seamless tube growth and/or maintenance probably by processing lumenal matrix proteins. In Drosophila melanogaster (Fruit fly), this protein is Serine protease filzig.